A 546-amino-acid polypeptide reads, in one-letter code: Alpha-taxilin (546 aa).

Disordered stretches follow at residues 1–170 (MKNQ…GLGK) and 482–546 (NKRV…SARA). Residues 11–21 (AKQSNPKSSPG) show a composition bias toward polar residues. 2 stretches are compositionally biased toward basic and acidic residues: residues 70–80 (DVSEELSRQLE) and 143–158 (EEIR…DHRR). Serine 72 is subject to Phosphoserine. Residues 186–491 (EEKLAALCKK…NKRVQDLSAG (306 aa)) are a coiled coil. Position 515 is a phosphoserine (serine 515). Residues 530–546 (TEASGQTGPQEPTSARA) show a composition bias toward polar residues.

This sequence belongs to the taxilin family. Binds to the C-terminal coiled coil region of syntaxin family members STX1A, STX3A and STX4A, but not when these proteins are complexed with SNAP25, VAMP2 or STXBP1, suggesting that it interacts with syntaxins that do not form the SNARE complex. In terms of tissue distribution, ubiquitous, with much higher expression in heart, kidney, liver and pancreas.

In terms of biological role, may be involved in intracellular vesicle traffic and potentially in calcium-dependent exocytosis in neuroendocrine cells. The polypeptide is Alpha-taxilin (TXLNA) (Homo sapiens (Human)).